Consider the following 238-residue polypeptide: Ubiquinone biosynthesis O-methyltransferase (238 aa).

The S-adenosyl-L-methionine site is built by R38, G58, D79, and M124.

It belongs to the methyltransferase superfamily. UbiG/COQ3 family.

The enzyme catalyses a 3-demethylubiquinol + S-adenosyl-L-methionine = a ubiquinol + S-adenosyl-L-homocysteine + H(+). It catalyses the reaction a 3-(all-trans-polyprenyl)benzene-1,2-diol + S-adenosyl-L-methionine = a 2-methoxy-6-(all-trans-polyprenyl)phenol + S-adenosyl-L-homocysteine + H(+). It functions in the pathway cofactor biosynthesis; ubiquinone biosynthesis. O-methyltransferase that catalyzes the 2 O-methylation steps in the ubiquinone biosynthetic pathway. This Acinetobacter baylyi (strain ATCC 33305 / BD413 / ADP1) protein is Ubiquinone biosynthesis O-methyltransferase.